The following is a 177-amino-acid chain: Large ribosomal subunit protein uL6 (177 aa).

Belongs to the universal ribosomal protein uL6 family. Part of the 50S ribosomal subunit.

In terms of biological role, this protein binds to the 23S rRNA, and is important in its secondary structure. It is located near the subunit interface in the base of the L7/L12 stalk, and near the tRNA binding site of the peptidyltransferase center. This chain is Large ribosomal subunit protein uL6, found in Pectobacterium atrosepticum (strain SCRI 1043 / ATCC BAA-672) (Erwinia carotovora subsp. atroseptica).